Reading from the N-terminus, the 598-residue chain is Nuclear receptor subfamily 4 group A member 1 (598 aa).

Disordered regions lie at residues 1-50 and 120-159; these read MPCI…PTAL and LDET…GSFG. 2 stretches are compositionally biased toward low complexity: residues 37 to 50 and 134 to 145; these read LASP…PTAL and SPCSAPSPSTPS. Residues 171 to 466 form a required for nuclear import region; the sequence is RAWTEQLPKA…PAEGKLIFCS (296 aa). Residues 264–339 constitute a DNA-binding region (nuclear receptor); that stretch reads EGRCAVCGDN…VGMVKEVVRT (76 aa). 2 consecutive NR C4-type zinc fingers follow at residues 267–287 and 303–327; these read CAVC…CEGC and CLAN…FQKC. Residues 268–354 are required for binding NBRE-containing DNA; that stretch reads AVCGDNASCQ…RRGRLPSKPK (87 aa). The tract at residues 299 to 361 is required for the interaction with RXRA; sequence AKYICLANKD…KPKQPPDASP (63 aa). S341 bears the Phosphoserine; by PKA mark. The segment at 341–361 is disordered; sequence SLKGRRGRLPSKPKQPPDASP. Position 351 is a phosphoserine; by PKA, RPS6KA1 and RPS6KA3 (S351). The region spanning 360-595 is the NR LBD domain; that stretch reads SPANLLTSLV…PIVDKIFMDT (236 aa). The tract at residues 521–544 is binds lipopolysaccharide; sequence PRRVEELQNRIASCLKEHVSAVAG. Residues 584 to 595 are AF-2; the sequence is PPPIVDKIFMDT.

It belongs to the nuclear hormone receptor family. NR4 subfamily. Binds the NGFI-B response element (NBRE) as a monomer. Binds the Nur response element (NurRE), consisting of two inverse NBRE-related octanucleotide repeats separated by 6 base-pairs, as a dimer. Interacts (via N-terminus) with NLRP3 (via LRR repeat domain); the interaction is direct, requires binding of NR4A1/Nur77 to NBRE-containing dsDNA and lipopolysaccharide, and leads to non-canonical NLRP3 inflammasome activation. Interacts with GADD45GIP1. Interacts with STK11. Heterodimer (via DNA-binding domain) with RXRA (via C-terminus); DNA-binding of the heterodimer is enhanced by 9-cis retinoic acid. Competes for the RXRA interaction with EP300 and thereby attenuates EP300 mediated acetylation of RXRA. Interacts with NCOA1. Interacts with NCOA2. Interacts with NCOA3. Zn(2+) serves as cofactor. Phosphorylated at Ser-351 by RPS6KA1 and RPS6KA3 in response to mitogenic or stress stimuli. Post-translationally, acetylated by p300/CBP, acetylation increases stability. Deacetylated by HDAC1.

The protein resides in the cytoplasm. Its subcellular location is the cytosol. It is found in the nucleus. It localises to the mitochondrion. In terms of biological role, orphan nuclear receptor. Binds the NGFI-B response element (NBRE) 5'-AAAGGTCA-3'. Binds 9-cis-retinoic acid outside of its ligand-binding (NR LBD) domain. Participates in energy homeostasis by sequestrating the kinase STK11 in the nucleus, thereby attenuating cytoplasmic AMPK activation. Regulates the inflammatory response in macrophages by regulating metabolic adaptations during inflammation, including repressing the transcription of genes involved in the citric acid cycle (TCA). Inhibits NF-kappa-B signaling by binding to low-affinity NF-kappa-B binding sites, such as at the IL2 promoter. May act concomitantly with NR4A2 in regulating the expression of delayed-early genes during liver regeneration. Plays a role in the vascular response to injury. Functionally, in the cytosol, upon its detection of both bacterial lipopolysaccharide (LPS) and NBRE-containing mitochondrial DNA released by GSDMD pores during pyroptosis, it promotes non-canonical NLRP3 inflammasome activation by stimulating association of NLRP3 and NEK7. This is Nuclear receptor subfamily 4 group A member 1 (NR4A1) from Canis lupus familiaris (Dog).